Reading from the N-terminus, the 765-residue chain is Palmitoyltransferase ZDHHC8 (765 aa).

The Cytoplasmic segment spans residues 1 to 13 (MPRSPGTRLKPAK). A helical membrane pass occupies residues 14–34 (YIPVATAAALLVGSSTLFFVF). Topologically, residues 35-52 (TCPWLTRAVSPAVPVYNG) are lumenal. Residues 53-73 (IIFLFVLANFSMATFMDPGVF) traverse the membrane as a helical segment. At 74-148 (PRADEDEDKE…NCIGRRNYRY (75 aa)) the chain is on the cytoplasmic side. A DHHC domain is found at 104 to 154 (KWCATCHFYRPPRCSHCSVCDNCVEDFDHHCPWVNNCIGRRNYRYFFLFLL). Cysteine 134 (S-palmitoyl cysteine intermediate) is an active-site residue. A helical membrane pass occupies residues 149–169 (FFLFLLSLSAHMVGVVAFGLV). Over 170-190 (YVLNHAEGLGAAHTTITMAVM) the chain is Lumenal. The chain crosses the membrane as a helical span at residues 191–211 (CVAGLFFIPVIGLTGFHVVLV). Topologically, residues 212 to 765 (TRGRTTNEQV…VGGTTYEISV (554 aa)) are cytoplasmic. The interval 293 to 352 (GLGRSKSKGSLDRLDEKPLDLGPPLPPKIEAGTFSSDLQTPRPGSAESALSVQRTSPPTP) is disordered. Positions 301–311 (GSLDRLDEKPL) are enriched in basic and acidic residues. At serine 337 the chain carries Phosphoserine. The residue at position 441 (arginine 441) is an Omega-N-methylarginine. The disordered stretch occupies residues 509–540 (LHPGATGDPPRPLPRSFSPVLGPRPREPSPVR). Phosphoserine occurs at positions 606, 627, 675, 725, and 743. The segment at 613–746 (GPGFGGARNP…PPGPSASPTR (134 aa)) is disordered. The segment covering 622-653 (PALQTSLSSLSSSVSRAPRTSSSSLQADQASS) has biased composition (low complexity).

This sequence belongs to the DHHC palmitoyltransferase family. ERF2/ZDHHC9 subfamily.

It is found in the golgi apparatus membrane. The protein resides in the mitochondrion membrane. It carries out the reaction L-cysteinyl-[protein] + hexadecanoyl-CoA = S-hexadecanoyl-L-cysteinyl-[protein] + CoA. Palmitoyltransferase that catalyzes the addition of palmitate onto various protein substrates and therefore functions in several unrelated biological processes. Through the palmitoylation of ABCA1 regulates the localization of the transporter to the plasma membrane and thereby regulates its function in cholesterol and phospholipid efflux. Could also pamitoylate the D(2) dopamine receptor DRD2 and regulate its stability and localization to the plasma membrane. Could also play a role in glutamatergic transmission. The protein is Palmitoyltransferase ZDHHC8 of Pan troglodytes (Chimpanzee).